The following is a 530-amino-acid chain: Chaperonin GroEL (530 aa).

Residues 30 to 33 (TLGP), Lys51, 87 to 91 (DGTTT), Gly415, and Asp495 each bind ATP.

Belongs to the chaperonin (HSP60) family. Forms a cylinder of 14 subunits composed of two heptameric rings stacked back-to-back. Interacts with the co-chaperonin GroES.

Its subcellular location is the cytoplasm. The enzyme catalyses ATP + H2O + a folded polypeptide = ADP + phosphate + an unfolded polypeptide.. Its function is as follows. Together with its co-chaperonin GroES, plays an essential role in assisting protein folding. The GroEL-GroES system forms a nano-cage that allows encapsulation of the non-native substrate proteins and provides a physical environment optimized to promote and accelerate protein folding. The sequence is that of Chaperonin GroEL from Carsonella ruddii (strain PV).